The following is an 876-amino-acid chain: Vacuolar protein sorting-associated protein 39 homolog (876 aa).

The CNH domain maps to 14-310; that stretch reads GVQIESIAAY…KFLVHADKGT (297 aa). The CHCR repeat unit spans residues 578–741; that stretch reads ELIEVESLPR…ILIPPTQPLY (164 aa).

It belongs to the VAM6/VPS39 family. In terms of assembly, part of the homotypic fusion and vacuole protein sorting (HOPS) complex, composed of Vps16A, car/Vps33A, dor/Vps18, Vps39, Vps11 and lt/Vps41. Interacts with Rab2 (GTP-bound form); the interaction is probably direct.

The protein localises to the cytoplasm. Its subcellular location is the lysosome membrane. The protein resides in the late endosome membrane. It localises to the late endosome. It is found in the lysosome. Its function is as follows. Part of the homotypic fusion and vacuole protein sorting (HOPS) tethering complex involved in endo-lysosomal vesicle trafficking and lysosome biogenesis. The HOPS complex facilitates docking and fusion of lysosomes with late endosomes and several other types of vesicles. The HOPS complex is also involved in autophagy and crinophagy (the elimination of unused secretory granules through their fusion with lysosomes). The HOPS complex mediates autophagocitic flux, probably by binding autophagosome-associated Syx17/syntaxin 17, promoting assembly of the trans-SNARE complex and instigating autophagosome-lysosome fusion. Independent of Syx17/syntaxin 17, HOPS is involved in biosynthetic transport to lysosomes and lysosome-related organelles such as eye-pigment granules. Required for autophagocytosis-dependent remodeling of myofibrils and transverse-tubules (T-tubules) during metamorphosis. The chain is Vacuolar protein sorting-associated protein 39 homolog from Drosophila melanogaster (Fruit fly).